The following is an 892-amino-acid chain: Translation initiation factor IF-2 (892 aa).

Positions 88–304 (KKRTFVKRDP…SSLQQGFQKP (217 aa)) are disordered. Basic and acidic residues-rich tracts occupy residues 93 to 159 (VKRD…KDKV) and 166 to 216 (DMTK…EENK). Basic residues predominate over residues 254–269 (GRGRNAKAARPAKKGK). Residues 270–282 (HAESKADREEARA) show a composition bias toward basic and acidic residues. One can recognise a tr-type G domain in the interval 391–560 (PRAPVVTIMG…LLQAEVLELK (170 aa)). Residues 400–407 (GHVDHGKT) are G1. 400-407 (GHVDHGKT) lines the GTP pocket. The interval 425–429 (GITQH) is G2. Positions 446–449 (DTPG) are G3. GTP contacts are provided by residues 446–450 (DTPGH) and 500–503 (NKID). The interval 500–503 (NKID) is G4. The tract at residues 536–538 (SAK) is G5.

This sequence belongs to the TRAFAC class translation factor GTPase superfamily. Classic translation factor GTPase family. IF-2 subfamily.

Its subcellular location is the cytoplasm. One of the essential components for the initiation of protein synthesis. Protects formylmethionyl-tRNA from spontaneous hydrolysis and promotes its binding to the 30S ribosomal subunits. Also involved in the hydrolysis of GTP during the formation of the 70S ribosomal complex. The polypeptide is Translation initiation factor IF-2 (Salmonella choleraesuis (strain SC-B67)).